The sequence spans 369 residues: Somatostatin receptor type 2 (369 aa).

At 1–43 the chain is on the extracellular side; it reads MEMSSEQLNGSQVWVSSPFDLNGSLGPSNGSNQTEPYYDMTSN. 4 N-linked (GlcNAc...) asparagine glycosylation sites follow: asparagine 9, asparagine 22, asparagine 29, and asparagine 32. A helical membrane pass occupies residues 44 to 67; that stretch reads AVLTFIYFVVCVVGLCGNTLVIYV. Over 68–78 the chain is Cytoplasmic; the sequence is ILRYAKMKTIT. The helical transmembrane segment at 79–103 threads the bilayer; it reads NIYILNLAIADELFMLGLPFLAMQV. Topologically, residues 104 to 118 are extracellular; sequence ALVHWPFGKAICRVV. A disulfide bridge connects residues cysteine 115 and cysteine 193. A helical transmembrane segment spans residues 119 to 138; sequence MTVDGINQFTSIFCLTVMSI. Over 139 to 161 the chain is Cytoplasmic; sequence DRYLAVVHPIKSAKWRRPRTAKM. A helical transmembrane segment spans residues 162-181; sequence INVAVWCVSLLVILPIMIYA. The Extracellular segment spans residues 182–207; sequence GLRSNQWGRSSCTINWPGESGAWYTG. The chain crosses the membrane as a helical span at residues 208 to 229; the sequence is FIIYAFILGFLVPLTIICLCYL. Over 230 to 253 the chain is Cytoplasmic; it reads FIIIKVKSSGIRVGSSKRKKSEKK. The chain crosses the membrane as a helical span at residues 254–278; the sequence is VTRMVSIVVAVFIFCWLPFYIFNVS. Residues 279 to 288 are Extracellular-facing; it reads SVSVAISPTP. The helical transmembrane segment at 289–303 threads the bilayer; sequence ALKGMFDFVVILTYA. Topologically, residues 304-369 are cytoplasmic; sequence NSCANPILYA…LLNGDLQTSI (66 aa). Residue cysteine 328 is the site of S-palmitoyl cysteine attachment. Residues serine 341, serine 343, and serine 348 each carry the phosphoserine modification. Phosphothreonine occurs at positions 353 and 354.

It belongs to the G-protein coupled receptor 1 family. As to quaternary structure, homodimer and heterodimer with SSTR3 and SSTR5. Heterodimerization with SSTR3 inactivates SSTR3 receptor function. Heterodimerization with SSTR5 is enhanced by agonist stimulation of SSTR2 and increases SSTR2 cell growth inhibition activity. Following agonist stimulation, homodimers dissociate into monomers which is required for receptor internalization. Interacts with beta-arrestin; this interaction is necessary for receptor internalization and is destabilized by heterodimerization with SSTR5 which results in increased recycling of SSTR2 to the cell surface. Interacts (via C-terminus) with SHANK1 (via PDZ domain). Post-translationally, phosphorylated on serine and threonine residues in response to agonist stimulation, leading to receptor desensitization and rapid internalization. Phosphorylated to a greater extent on serine than threonine residues. Threonine phosphorylation is required for arrestin binding and receptor endocytosis but is not necessary for desensitization. As to expression, cerebrum and kidney.

It is found in the cell membrane. Its subcellular location is the cytoplasm. Functionally, receptor for somatostatin-14 and -28. This receptor is coupled via pertussis toxin sensitive G proteins to inhibition of adenylyl cyclase. In addition it stimulates phosphotyrosine phosphatase and PLC via pertussis toxin insensitive as well as sensitive G proteins. Inhibits calcium entry by suppressing voltage-dependent calcium channels. Acts as the functionally dominant somatostatin receptor in pancreatic alpha- and beta-cells where it mediates the inhibitory effect of somatostatin-14 on hormone secretion. Inhibits cell growth through enhancement of MAPK1 and MAPK2 phosphorylation and subsequent up-regulation of CDKN1B. Stimulates neuronal migration and axon outgrowth and may participate in neuron development and maturation during brain development. Mediates negative regulation of insulin receptor signaling through PTPN6. Inactivates SSTR3 receptor function following heterodimerization. This Mus musculus (Mouse) protein is Somatostatin receptor type 2 (Sstr2).